The primary structure comprises 761 residues: DNA topoisomerase 1 (761 aa).

In terms of domain architecture, Toprim spans Thr-6 to Lys-143. The Mg(2+) site is built by Glu-12 and Asp-111. In terms of domain architecture, Topo IA-type catalytic spans Asp-157–Leu-569. Residues Ser-196–Gln-201 form an interaction with DNA region. Tyr-315 functions as the O-(5'-phospho-DNA)-tyrosine intermediate in the catalytic mechanism. 3 consecutive C4-type zinc fingers follow at residues Cys-600–Cys-626, Cys-680–Cys-706, and Cys-721–Cys-747.

This sequence belongs to the type IA topoisomerase family. In terms of assembly, monomer. Mg(2+) serves as cofactor.

The enzyme catalyses ATP-independent breakage of single-stranded DNA, followed by passage and rejoining.. Functionally, releases the supercoiling and torsional tension of DNA, which is introduced during the DNA replication and transcription, by transiently cleaving and rejoining one strand of the DNA duplex. Introduces a single-strand break via transesterification at a target site in duplex DNA. The scissile phosphodiester is attacked by the catalytic tyrosine of the enzyme, resulting in the formation of a DNA-(5'-phosphotyrosyl)-enzyme intermediate and the expulsion of a 3'-OH DNA strand. The free DNA strand then undergoes passage around the unbroken strand, thus removing DNA supercoils. Finally, in the religation step, the DNA 3'-OH attacks the covalent intermediate to expel the active-site tyrosine and restore the DNA phosphodiester backbone. The polypeptide is DNA topoisomerase 1 (Methanocaldococcus jannaschii (strain ATCC 43067 / DSM 2661 / JAL-1 / JCM 10045 / NBRC 100440) (Methanococcus jannaschii)).